An 88-amino-acid polypeptide reads, in one-letter code: ATP synthase subunit c 2 (88 aa).

2 helical membrane-spanning segments follow: residues 4 to 24 (FSWV…GTGI) and 53 to 73 (IGLA…MIIL).

It belongs to the ATPase C chain family. F-type ATPases have 2 components, F(1) - the catalytic core - and F(0) - the membrane proton channel. F(1) has five subunits: alpha(3), beta(3), gamma(1), delta(1), epsilon(1). F(0) has three main subunits: a(1), b(2) and c(10-14). The alpha and beta chains form an alternating ring which encloses part of the gamma chain. F(1) is attached to F(0) by a central stalk formed by the gamma and epsilon chains, while a peripheral stalk is formed by the delta and b chains.

The protein localises to the cell inner membrane. F(1)F(0) ATP synthase produces ATP from ADP in the presence of a proton or sodium gradient. F-type ATPases consist of two structural domains, F(1) containing the extramembraneous catalytic core and F(0) containing the membrane proton channel, linked together by a central stalk and a peripheral stalk. During catalysis, ATP synthesis in the catalytic domain of F(1) is coupled via a rotary mechanism of the central stalk subunits to proton translocation. Functionally, key component of the F(0) channel; it plays a direct role in translocation across the membrane. A homomeric c-ring of between 10-14 subunits forms the central stalk rotor element with the F(1) delta and epsilon subunits. The chain is ATP synthase subunit c 2 from Syntrophotalea carbinolica (strain DSM 2380 / NBRC 103641 / GraBd1) (Pelobacter carbinolicus).